Consider the following 293-residue polypeptide: SAGA-associated factor 29 (293 aa).

Residues 3–88 (LVSADSRIAE…KALDKIAEIK (86 aa)) adopt a coiled-coil conformation. One can recognise an SGF29 C-terminal domain in the interval 152 to 293 (GDYVARPGDK…VVACKEPKKK (142 aa)). 2 histone H3K4me3 N-terminus binding regions span residues 194–196 (DID) and 240–243 (QTTC). Residues 264–266 (FED) form a histone H3K4me3 binding region. Residue Lys-288 is modified to N6-acetyllysine.

The protein belongs to the SGF29 family. Interacts with dimethylated and trimethylated 'Lys-4' of histone H3 (H3K4me2 and H3K4me3), with a preference for the trimethylated form (H3K4me3). Component of some SAGA-type complexes. Component of the ADA2A-containing complex (ATAC), composed of KAT14, KAT2A, TADA2L, TADA3L, ZZ3, MBIP, WDR5, YEATS2, CCDC101 and DR1. Interacts with (methylated) CGAS. Interacts with TADA3L, GCN5L2, SUPT3H and MYC.

Its subcellular location is the nucleus. Chromatin reader component of some histone acetyltransferase (HAT) SAGA-type complexes like the TFTC-HAT, ATAC or STAGA complexes. SGF29 specifically recognizes and binds methylated 'Lys-4' of histone H3 (H3K4me), with a preference for trimethylated form (H3K4me3). In the SAGA-type complexes, SGF29 is required to recruit complexes to H3K4me. Involved in the response to endoplasmic reticulum (ER) stress by recruiting the SAGA complex to H3K4me, thereby promoting histone H3 acetylation and cell survival. Also binds non-histone proteins that are methylated on Lys residues: specifically recognizes and binds CGAS monomethylated on 'Lys-506'. This chain is SAGA-associated factor 29, found in Homo sapiens (Human).